The primary structure comprises 572 residues: Urease subunit alpha (572 aa).

The Urease domain maps to 136 to 572 (GGIDTHIHFI…VPLGQRYFLF (437 aa)). Ni(2+) contacts are provided by His141, His143, and Lys224. The residue at position 224 (Lys224) is an N6-carboxylysine. His226 serves as a coordination point for substrate. His253 and His279 together coordinate Ni(2+). The Proton donor role is filled by His327. Asp367 serves as a coordination point for Ni(2+).

It belongs to the metallo-dependent hydrolases superfamily. Urease alpha subunit family. In terms of assembly, heterotrimer of UreA (gamma), UreB (beta) and UreC (alpha) subunits. Three heterotrimers associate to form the active enzyme. Ni cation is required as a cofactor. In terms of processing, carboxylation allows a single lysine to coordinate two nickel ions.

It localises to the cytoplasm. It carries out the reaction urea + 2 H2O + H(+) = hydrogencarbonate + 2 NH4(+). It functions in the pathway nitrogen metabolism; urea degradation; CO(2) and NH(3) from urea (urease route): step 1/1. The polypeptide is Urease subunit alpha (Haemophilus influenzae (strain 86-028NP)).